Consider the following 828-residue polypeptide: DNA topoisomerase 3 (828 aa).

A Toprim domain is found at 4 to 149; it reads RILNVAEKPS…KFEFYRAHFS (146 aa). Positions 167-617 constitute a Topo IA-type catalytic domain; sequence NEKDSIAVDT…STIEKYKQLY (451 aa). Catalysis depends on Tyr361, which acts as the O-(5'-phospho-DNA)-tyrosine intermediate. The tract at residues 763–828 is disordered; that stretch reads QQQQQQQQQQ…SDRNNNNFIF (66 aa).

This sequence belongs to the type IA topoisomerase family.

The catalysed reaction is ATP-independent breakage of single-stranded DNA, followed by passage and rejoining.. Releases the supercoiling and torsional tension of DNA introduced during the DNA replication and transcription by transiently cleaving and rejoining one strand of the DNA duplex. Introduces a single-strand break via transesterification at a target site in duplex DNA. The scissile phosphodiester is attacked by the catalytic tyrosine of the enzyme, resulting in the formation of a DNA-(5'-phosphotyrosyl)-enzyme intermediate and the expulsion of a 3'-OH DNA strand. The free DNA strand than undergoes passage around the unbroken strand thus removing DNA supercoils. Finally, in the religation step, the DNA 3'-OH attacks the covalent intermediate to expel the active-site tyrosine and restore the DNA phosphodiester backbone. This is DNA topoisomerase 3 (top3) from Dictyostelium discoideum (Social amoeba).